Here is a 263-residue protein sequence, read N- to C-terminus: 4-hydroxy-2-oxo-heptane-1,7-dioate aldolase (263 aa).

Histidine 45 serves as the catalytic Proton acceptor. Glutamine 147 contacts substrate. An a divalent metal cation-binding site is contributed by glutamate 149. 2 residues coordinate substrate: alanine 174 and aspartate 175. Aspartate 175 contributes to the a divalent metal cation binding site.

It belongs to the HpcH/HpaI aldolase family. As to quaternary structure, homohexamer; trimer of dimers. The cofactor is a divalent metal cation.

The enzyme catalyses 4-hydroxy-2-oxoheptanedioate = succinate semialdehyde + pyruvate. It functions in the pathway aromatic compound metabolism; 4-hydroxyphenylacetate degradation; pyruvate and succinate semialdehyde from 4-hydroxyphenylacetate: step 7/7. Functionally, catalyzes the reversible retro-aldol cleavage of 4-hydroxy-2-ketoheptane-1,7-dioate (HKHD) to pyruvate and succinic semialdehyde. The sequence is that of 4-hydroxy-2-oxo-heptane-1,7-dioate aldolase from Salmonella heidelberg (strain SL476).